We begin with the raw amino-acid sequence, 143 residues long: uncharacterized protein (143 aa).

The 129-residue stretch at 11-139 (EYELTTFIRR…FGELLQRMNK (129 aa)) folds into the HTH marR-type domain. The H-T-H motif DNA-binding region spans 53 to 76 (VKELAESFKLDISTLSRQAAALEA).

This is an uncharacterized protein from Bacillus subtilis (strain 168).